A 3093-amino-acid chain; its full sequence is Genome polyprotein (3093 aa).

One can recognise a Peptidase S30 domain in the interval Lys-255–Tyr-403. Catalysis depends on for P1 proteinase activity residues His-311, Asp-323, and Ser-355. In terms of domain architecture, Peptidase C6 spans His-690–Gly-809. Catalysis depends on for helper component proteinase activity residues Cys-698 and His-769. The 152-residue stretch at Arg-1215–Leu-1366 folds into the Helicase ATP-binding domain. Gly-1228–Ser-1235 is a binding site for ATP. A DEVH box motif is present at residues Asp-1316–His-1319. Positions Pro-1367–Asn-1546 constitute a Helicase C-terminal domain. The Nuclear localization signal motif lies at Asp-1883–Gln-1895. The residue at position 1915 (Tyr-1915) is an O-(5'-phospho-RNA)-tyrosine. The 217-residue stretch at Ser-2041–Asn-2257 folds into the Peptidase C4 domain. Active-site for nuclear inclusion protein A activity residues include His-2082, Asp-2121, and Cys-2193. A RdRp catalytic domain is found at Glu-2516 to Val-2639. Residues Asn-2800–Pro-2826 are compositionally biased toward low complexity. The interval Asn-2800–Ile-2842 is disordered.

It belongs to the potyviridae genome polyprotein family. Post-translationally, VPg is uridylylated by the polymerase and is covalently attached to the 5'-end of the genomic RNA. This uridylylated form acts as a nucleotide-peptide primer for the polymerase. In terms of processing, genome polyprotein of potyviruses undergoes post-translational proteolytic processing by the main proteinase NIa-pro resulting in the production of at least ten individual proteins. The P1 proteinase and the HC-pro cleave only their respective C-termini autocatalytically. 6K1 is essential for proper proteolytic separation of P3 from CI.

The protein resides in the host cytoplasmic vesicle. It localises to the virion. The enzyme catalyses RNA(n) + a ribonucleoside 5'-triphosphate = RNA(n+1) + diphosphate. The catalysed reaction is Hydrolyzes glutaminyl bonds, and activity is further restricted by preferences for the amino acids in P6 - P1' that vary with the species of potyvirus, e.g. Glu-Xaa-Xaa-Tyr-Xaa-Gln-|-(Ser or Gly) for the enzyme from tobacco etch virus. The natural substrate is the viral polyprotein, but other proteins and oligopeptides containing the appropriate consensus sequence are also cleaved.. It catalyses the reaction Hydrolyzes a Gly-|-Gly bond at its own C-terminus, commonly in the sequence -Tyr-Xaa-Val-Gly-|-Gly, in the processing of the potyviral polyprotein.. Required for aphid transmission and also has proteolytic activity. Only cleaves a Gly-Gly dipeptide at its own C-terminus. Interacts with virions and aphid stylets. Acts as a suppressor of RNA-mediated gene silencing, also known as post-transcriptional gene silencing (PTGS), a mechanism of plant viral defense that limits the accumulation of viral RNAs. May have RNA-binding activity. Its function is as follows. Has helicase activity. It may be involved in replication. In terms of biological role, indispensable for virus replication. Reduces the abundance of host transcripts related to jasmonic acid biosynthesis therefore altering the host defenses. In order to increase its own stability, decreases host protein degradation pathways. Functionally, indispensable for virus replication. Mediates the cap-independent, EIF4E-dependent translation of viral genomic RNAs. Binds to the cap-binding site of host EIF4E and thus interferes with the host EIF4E-dependent mRNA export and translation. VPg-RNA directly binds EIF4E and is a template for transcription. Also forms trimeric complexes with EIF4E-EIF4G, which are templates for translation. Its function is as follows. Has RNA-binding and proteolytic activities. In terms of biological role, an RNA-dependent RNA polymerase that plays an essential role in the virus replication. Functionally, involved in aphid transmission, cell-to-cell and systemis movement, encapsidation of the viral RNA and in the regulation of viral RNA amplification. This is Genome polyprotein from Brome streak virus (strain 11-Cal) (BStV).